The sequence spans 242 residues: Uridylate kinase (242 aa).

Position 11–14 (11–14 (KLSG)) interacts with ATP. Positions 19 to 24 (GEKGAG) are involved in allosteric activation by GTP. UMP is bound at residue glycine 53. Residues glycine 54 and arginine 58 each coordinate ATP. UMP is bound by residues aspartate 73 and 134-141 (IGSPYFST). Positions 162, 168, and 171 each coordinate ATP.

The protein belongs to the UMP kinase family. As to quaternary structure, homohexamer.

The protein localises to the cytoplasm. The catalysed reaction is UMP + ATP = UDP + ADP. It functions in the pathway pyrimidine metabolism; CTP biosynthesis via de novo pathway; UDP from UMP (UMPK route): step 1/1. Allosterically activated by GTP. Inhibited by UTP. In terms of biological role, catalyzes the reversible phosphorylation of UMP to UDP. In Streptococcus pyogenes serotype M2 (strain MGAS10270), this protein is Uridylate kinase.